We begin with the raw amino-acid sequence, 237 residues long: NAD-dependent protein deacylase (237 aa).

Residues 1 to 235 form the Deacetylase sirtuin-type domain; sequence MRIAVLSGAG…PGLLQRLPAL (235 aa). Residue 8 to 28 coordinates NAD(+); it reads GAGISAESGVPTFRDDKNGLW. Residues tyrosine 53 and arginine 56 each coordinate substrate. 86-89 is a binding site for NAD(+); sequence QNVD. The Proton acceptor role is filled by histidine 104. The Zn(2+) site is built by cysteine 112, cysteine 115, cysteine 138, and cysteine 140. Residues 177 to 179, 203 to 205, and alanine 221 contribute to the NAD(+) site; these read GTS and NPE.

Belongs to the sirtuin family. Class III subfamily. Requires Zn(2+) as cofactor.

It localises to the cytoplasm. It carries out the reaction N(6)-acetyl-L-lysyl-[protein] + NAD(+) + H2O = 2''-O-acetyl-ADP-D-ribose + nicotinamide + L-lysyl-[protein]. The catalysed reaction is N(6)-succinyl-L-lysyl-[protein] + NAD(+) + H2O = 2''-O-succinyl-ADP-D-ribose + nicotinamide + L-lysyl-[protein]. Functionally, NAD-dependent lysine deacetylase and desuccinylase that specifically removes acetyl and succinyl groups on target proteins. Modulates the activities of several proteins which are inactive in their acylated form. The protein is NAD-dependent protein deacylase of Mycolicibacterium paratuberculosis (strain ATCC BAA-968 / K-10) (Mycobacterium paratuberculosis).